Consider the following 78-residue polypeptide: Vacuolar ATPase assembly integral membrane protein VMA21 (78 aa).

The Cytoplasmic portion of the chain corresponds to methionine 1–valine 14. A helical membrane pass occupies residues phenylalanine 15 to phenylalanine 35. Over serine 36–asparagine 38 the chain is Lumenal. A helical transmembrane segment spans residues alanine 39–valine 59. Topologically, residues alanine 60–arginine 78 are cytoplasmic. Positions lysine 75–arginine 78 match the Prevents secretion from ER motif.

The protein belongs to the VMA21 family.

Its subcellular location is the endoplasmic reticulum membrane. The protein localises to the endoplasmic reticulum-Golgi intermediate compartment membrane. The protein resides in the cytoplasmic vesicle. It is found in the COPII-coated vesicle membrane. Its function is as follows. Required for the assembly of the V0 complex of the vacuolar ATPase (V-ATPase) in the endoplasmic reticulum. The polypeptide is Vacuolar ATPase assembly integral membrane protein VMA21 (Debaryomyces hansenii (strain ATCC 36239 / CBS 767 / BCRC 21394 / JCM 1990 / NBRC 0083 / IGC 2968) (Yeast)).